Consider the following 88-residue polypeptide: Small ribosomal subunit protein bS16 (88 aa).

It belongs to the bacterial ribosomal protein bS16 family.

In Geobacter sp. (strain M21), this protein is Small ribosomal subunit protein bS16.